Reading from the N-terminus, the 203-residue chain is Histidine biosynthesis bifunctional protein HisIE (203 aa).

The tract at residues 1-114 (MLTEQQRREL…FGDTAHQWLF (114 aa)) is phosphoribosyl-AMP cyclohydrolase. The segment at 115–203 (LYQLEQLLAE…VIENLRKRHQ (89 aa)) is phosphoribosyl-ATP pyrophosphohydrolase.

In the N-terminal section; belongs to the PRA-CH family. It in the C-terminal section; belongs to the PRA-PH family.

It is found in the cytoplasm. It carries out the reaction 1-(5-phospho-beta-D-ribosyl)-ATP + H2O = 1-(5-phospho-beta-D-ribosyl)-5'-AMP + diphosphate + H(+). The catalysed reaction is 1-(5-phospho-beta-D-ribosyl)-5'-AMP + H2O = 1-(5-phospho-beta-D-ribosyl)-5-[(5-phospho-beta-D-ribosylamino)methylideneamino]imidazole-4-carboxamide. It participates in amino-acid biosynthesis; L-histidine biosynthesis; L-histidine from 5-phospho-alpha-D-ribose 1-diphosphate: step 2/9. Its pathway is amino-acid biosynthesis; L-histidine biosynthesis; L-histidine from 5-phospho-alpha-D-ribose 1-diphosphate: step 3/9. This Shigella sonnei (strain Ss046) protein is Histidine biosynthesis bifunctional protein HisIE.